Here is a 680-residue protein sequence, read N- to C-terminus: DNA ligase (680 aa).

Residues 35 to 39 (DAQYD), 84 to 85 (SL), and Glu115 each bind NAD(+). Catalysis depends on Lys117, which acts as the N6-AMP-lysine intermediate. 4 residues coordinate NAD(+): Arg138, Glu174, Lys291, and Lys315. Zn(2+)-binding residues include Cys419, Cys422, Cys437, and Cys442. Positions 601 to 680 (NKNMPFSGME…REFINMLEQS (80 aa)) constitute a BRCT domain.

The protein belongs to the NAD-dependent DNA ligase family. LigA subfamily. Requires Mg(2+) as cofactor. Mn(2+) serves as cofactor.

The enzyme catalyses NAD(+) + (deoxyribonucleotide)n-3'-hydroxyl + 5'-phospho-(deoxyribonucleotide)m = (deoxyribonucleotide)n+m + AMP + beta-nicotinamide D-nucleotide.. In terms of biological role, DNA ligase that catalyzes the formation of phosphodiester linkages between 5'-phosphoryl and 3'-hydroxyl groups in double-stranded DNA using NAD as a coenzyme and as the energy source for the reaction. It is essential for DNA replication and repair of damaged DNA. This chain is DNA ligase, found in Dehalococcoides mccartyi (strain ATCC BAA-2100 / JCM 16839 / KCTC 5957 / BAV1).